The following is a 241-amino-acid chain: Penton protein H240R (241 aa).

The protein belongs to the asfivirus H240R family.

It is found in the virion. In terms of biological role, forms the penton at the fivefold vertices of the icosahedral capsid. Together with the minor capsid proteins (p17, p49, and M1249L), forms a complicated network immediately below the outer capsid shell, stabilizing the whole capsid. This African swine fever virus (isolate Tick/Malawi/Lil 20-1/1983) (ASFV) protein is Penton protein H240R.